Here is a 602-residue protein sequence, read N- to C-terminus: Aryl hydrocarbon receptor protein 1 (602 aa).

Residues 1 to 2 constitute a propeptide that is removed on maturation; sequence MY. Basic residues predominate over residues 1–12; that stretch reads MYASKRRQRNFK. The disordered stretch occupies residues 1-28; the sequence is MYASKRRQRNFKRVRDPPKQLTNTNPSK. 2 consecutive short sequence motifs (nuclear localization signal) follow at residues 5-8 and 28-33; these read KRRQ and KRHRER. One can recognise a bHLH domain in the interval 18-71; the sequence is PKQLTNTNPSKRHRERLNGELETVAMLLPYDSSTISRLDKLSVLRLAVSFLQCK. Required for maintaining the overall integrity of the AHR:ARNT heterodimer and its transcriptional activity stretches follow at residues 41–73, 133–141, and 266–268; these read VAMLLPYDSSTISRLDKLSVLRLAVSFLQCKAH, SLKSLGGFI, and ICV. Residues 55-63 carry the Nuclear export signal motif; that stretch reads LDKLSVLRL. The 71-residue stretch at 126 to 196 folds into the PAS domain; that stretch reads ESNFEEISLK…QQLDSNFHIP (71 aa). The tract at residues 440–467 is disordered; the sequence is STSNSLFPSVPVPTPTTTKANRRRKENS.

Interacts with daf-21/hsp90. Interacts with aha-1. In terms of tissue distribution, expressed in many distinct neuronal cells including RMED, RMEV, RMEL and RMER. Functions in URX neurons to promote aggregation behavior.

The protein resides in the nucleus. In terms of biological role, probable ligand-activated transcriptional activator. Acts as a transcriptional regulator in GABAergic motor neuron cell fate specification and development. Promotes cell-type-specific expression of guanylate cyclase genes that have key roles in aggregation behavior and hyperoxia avoidance. Has no role in carbon dioxide avoidance. The chain is Aryl hydrocarbon receptor protein 1 from Caenorhabditis elegans.